We begin with the raw amino-acid sequence, 751 residues long: Semaphorin-3C (751 aa).

The signal sequence occupies residues 1-20; that stretch reads MAFRTICVLVGVFICSICVK. Positions 28 to 511 constitute a Sema domain; the sequence is RVYLTFDELR…SNEGVSQVSL (484 aa). An N-linked (GlcNAc...) asparagine glycan is attached at Asn-81. Cys-101 and Cys-112 form a disulfide bridge. Asn-123 carries an N-linked (GlcNAc...) asparagine glycan. An intrachain disulfide couples Cys-130 to Cys-139. Residues Asn-252 and Asn-268 are each glycosylated (N-linked (GlcNAc...) asparagine). Intrachain disulfides connect Cys-266–Cys-378 and Cys-290–Cys-338. Asn-465 is a glycosylation site (N-linked (GlcNAc...) asparagine). The cysteines at positions 514 and 532 are disulfide-linked. Residues 571 to 655 enclose the Ig-like C2-type domain; it reads AYRNAAEIVQ…TENSFKQTIA (85 aa). 2 N-linked (GlcNAc...) asparagine glycosylation sites follow: Asn-585 and Asn-586. A disulfide bridge connects residues Cys-643 and Cys-709. Basic and acidic residues predominate over residues 712–731; it reads TRQQHQQGDESQKMRGDYGK. A disordered region spans residues 712 to 751; that stretch reads TRQQHQQGDESQKMRGDYGKLKALINSRKSRNRRNQLPES.

The protein belongs to the semaphorin family. Interacts with PLXND1. As to expression, expressed intensely in the heart, skeletal muscle, colon, small intestine, ovary, testis, and prostate. Faint expression ubiquitously among other organs, including brain.

The protein resides in the secreted. Its function is as follows. Binds to plexin family members and plays an important role in the regulation of developmental processes. Required for normal cardiovascular development during embryogenesis. Functions as attractant for growing axons, and thereby plays an important role in axon growth and axon guidance. This Homo sapiens (Human) protein is Semaphorin-3C (SEMA3C).